An 84-amino-acid polypeptide reads, in one-letter code: Transmembrane protein EP84R (84 aa).

2 consecutive transmembrane segments (helical) span residues 31–51 and 60–80; these read VIGVILLVISLLFIFIGIIIL and AASIFIVLSLILGGGGFFLIY.

Belongs to the asfivirus EP84R family.

The protein resides in the virion membrane. The protein is Transmembrane protein EP84R of Ornithodoros (relapsing fever ticks).